A 624-amino-acid chain; its full sequence is APC membrane recruitment protein 2 (624 aa).

Disordered stretches follow at residues 77–111, 126–177, 195–230, 342–369, and 397–588; these read EEPC…SVAK, ENVK…GLIL, PLCE…PLNG, ADQD…SKKN, and FSMI…ELPR. A compositionally biased stretch (low complexity) spans 102–111; it reads DVSSDSSVAK. Composition is skewed to basic and acidic residues over residues 155–168 and 195–204; these read SKKD…KEGA and PLCEKEKSEE. Over residues 352–363 the composition is skewed to low complexity; that stretch reads KGSKVVPGNGKK. Composition is skewed to basic and acidic residues over residues 422-435 and 450-469; these read REVK…DRNT and ERGD…RNSD.

The protein belongs to the Amer family.

The protein resides in the cell membrane. Functionally, negative regulator of the canonical Wnt signaling pathway involved in neuroectodermal patterning. Acts by specifically binding phosphatidylinositol 4,5-bisphosphate (PtdIns(4,5)P2), translocating to the cell membrane and interacting with key regulators of the canonical Wnt signaling pathway, such as components of the beta-catenin destruction complex. The sequence is that of APC membrane recruitment protein 2 (amer2) from Xenopus laevis (African clawed frog).